Reading from the N-terminus, the 480-residue chain is tRNA-2-methylthio-N(6)-dimethylallyladenosine synthase (480 aa).

The region spanning 32-149 (RKLYIRTFGC…LPELIRRRRA (118 aa)) is the MTTase N-terminal domain. Residues C41, C78, C112, C186, C190, and C193 each contribute to the [4Fe-4S] cluster site. In terms of domain architecture, Radical SAM core spans 172–405 (RIEGATAFVS…QALINAQAAA (234 aa)). Positions 408–471 (QAMVGTRQRL…PNSLRARVAD (64 aa)) constitute a TRAM domain.

This sequence belongs to the methylthiotransferase family. MiaB subfamily. As to quaternary structure, monomer. It depends on [4Fe-4S] cluster as a cofactor.

The protein localises to the cytoplasm. The enzyme catalyses N(6)-dimethylallyladenosine(37) in tRNA + (sulfur carrier)-SH + AH2 + 2 S-adenosyl-L-methionine = 2-methylsulfanyl-N(6)-dimethylallyladenosine(37) in tRNA + (sulfur carrier)-H + 5'-deoxyadenosine + L-methionine + A + S-adenosyl-L-homocysteine + 2 H(+). Catalyzes the methylthiolation of N6-(dimethylallyl)adenosine (i(6)A), leading to the formation of 2-methylthio-N6-(dimethylallyl)adenosine (ms(2)i(6)A) at position 37 in tRNAs that read codons beginning with uridine. In Bordetella petrii (strain ATCC BAA-461 / DSM 12804 / CCUG 43448), this protein is tRNA-2-methylthio-N(6)-dimethylallyladenosine synthase.